Here is a 430-residue protein sequence, read N- to C-terminus: ETS domain-containing protein Elk-4 (430 aa).

A DNA-binding region (ETS) is located at residues 5 to 85 (ITLWQFLLQL…NGQKFVYKFV (81 aa)). The span at 116–127 (SKDVEYGGKERP) shows a compositional bias: basic and acidic residues. The segment at 116–138 (SKDVEYGGKERPPQPGAKTSSRN) is disordered. Residue Lys-166 forms a Glycyl lysine isopeptide (Lys-Gly) (interchain with G-Cter in SUMO2) linkage. Disordered stretches follow at residues 245 to 279 (TTFN…DIDT) and 292 to 325 (PENL…KGLE). Pro residues predominate over residues 249–272 (PTPPVPSTPLPLKEPPRTPSPPLS). Residues 299–312 (PKNEDSALPEKDKT) show a composition bias toward basic and acidic residues.

This sequence belongs to the ETS family. In terms of assembly, interacts with SIRT7. In terms of tissue distribution, lung and liver.

It is found in the nucleus. Its function is as follows. Involved in both transcriptional activation and repression. Interaction with SIRT7 leads to recruitment and stabilization of SIRT7 at promoters, followed by deacetylation of histone H3 at 'Lys-18' (H3K18Ac) and subsequent transcription repression. Forms a ternary complex with the serum response factor (SRF). Requires DNA-bound SRF for ternary complex formation and makes extensive DNA contacts to the 5'side of SRF, but does not bind DNA autonomously. In Mus musculus (Mouse), this protein is ETS domain-containing protein Elk-4 (Elk4).